Consider the following 366-residue polypeptide: MWNATPSEEPGSNLTRAELGWDAPPGNDSLADELLQLFPAPLLAGVTATCVALFVVGIAGNLLTMLVVSRFRELRTTTNLYLSSMAFSDLLIFLCMPLDLVRLWQYRPWNFGDLLCKLFQFVSESCTYATVLTITALSVERYFAICFPLRAKVVVTKGRVKLVILVIWALAFCSAGPIFVLVGVEHENGTDPQDTNECRATEFAVRSGLLTIMVWVSSVFFFLPVFCLTVLYSLIGRKLWRRKRGDGAVGSSLRDQNHRQTVKMLAVVVFAFILCWLPFHVGRYLFSKSFEPGSLEIAQISQYCNLVSFVLFYLSAAINPILYNIMSKKYRVAVFKLLGFEPFSQRKLSTLKDESSRAWTKSSINT.

Residues 1-40 (MWNATPSEEPGSNLTRAELGWDAPPGNDSLADELLQLFPA) are Extracellular-facing. N-linked (GlcNAc...) asparagine glycosylation is found at N13 and N27. A helical membrane pass occupies residues 41–66 (PLLAGVTATCVALFVVGIAGNLLTML). At 67–72 (VVSRFR) the chain is on the cytoplasmic side. Residues 73 to 96 (ELRTTTNLYLSSMAFSDLLIFLCM) traverse the membrane as a helical segment. The Extracellular portion of the chain corresponds to 97-117 (PLDLVRLWQYRPWNFGDLLCK). C116 and C198 are disulfide-bonded. The helical transmembrane segment at 118-139 (LFQFVSESCTYATVLTITALSV) threads the bilayer. The Cytoplasmic portion of the chain corresponds to 140-162 (ERYFAICFPLRAKVVVTKGRVKL). A helical transmembrane segment spans residues 163-183 (VILVIWALAFCSAGPIFVLVG). The Extracellular segment spans residues 184 to 211 (VEHENGTDPQDTNECRATEFAVRSGLLT). The N-linked (GlcNAc...) asparagine glycan is linked to N188. The helical transmembrane segment at 212–235 (IMVWVSSVFFFLPVFCLTVLYSLI) threads the bilayer. Over 236–263 (GRKLWRRKRGDGAVGSSLRDQNHRQTVK) the chain is Cytoplasmic. The chain crosses the membrane as a helical span at residues 264–285 (MLAVVVFAFILCWLPFHVGRYL). Residues 286 to 302 (FSKSFEPGSLEIAQISQ) lie on the Extracellular side of the membrane. The helical transmembrane segment at 303 to 326 (YCNLVSFVLFYLSAAINPILYNIM) threads the bilayer. Over 327 to 366 (SKKYRVAVFKLLGFEPFSQRKLSTLKDESSRAWTKSSINT) the chain is Cytoplasmic.

The protein belongs to the G-protein coupled receptor 1 family.

It localises to the cell membrane. Its function is as follows. Receptor for ghrelin, coupled to G-alpha-11 proteins. Stimulates growth hormone secretion. Also binds other growth hormone releasing peptides (GHRP) (e.g. Met-enkephalin and GHRP-6) as well as non-peptide, low molecular weight secretagogues (e.g. L-692,429, MK-0677, adenosine). The chain is Growth hormone secretagogue receptor type 1 (GHSR) from Oryctolagus cuniculus (Rabbit).